A 181-amino-acid polypeptide reads, in one-letter code: Adenylate kinase (181 aa).

10–15 (GAGKGT) provides a ligand contact to ATP. The NMP stretch occupies residues 30 to 59 (STGDLFRANIGQATALGVEAKKYIDAGELV). AMP is bound by residues Thr-31, Arg-36, 57–59 (ELV), 85–88 (GFPR), and Gln-92. The tract at residues 126-132 (ARGRADD) is LID. Arg-127 provides a ligand contact to ATP. AMP-binding residues include Arg-129 and Arg-140. Residue Gly-166 participates in ATP binding.

The protein belongs to the adenylate kinase family. Monomer.

The protein resides in the cytoplasm. It catalyses the reaction AMP + ATP = 2 ADP. It functions in the pathway purine metabolism; AMP biosynthesis via salvage pathway; AMP from ADP: step 1/1. In terms of biological role, catalyzes the reversible transfer of the terminal phosphate group between ATP and AMP. Plays an important role in cellular energy homeostasis and in adenine nucleotide metabolism. This chain is Adenylate kinase, found in Rhodococcus erythropolis (strain PR4 / NBRC 100887).